The primary structure comprises 1130 residues: 3-hydroxy-3-methylglutaryl-coenzyme A reductase 1 (1130 aa).

The Cytoplasmic portion of the chain corresponds to 1–46 (MATSLITRKLRSAEATNDVEPGWLKRQVTGVLQSISSHACQHPIHT). A helical membrane pass occupies residues 47 to 67 (IVVIALLASTTYVGLLEGSLF). Residues 68–242 (DSVRNSRNIA…DLIKHAETID (175 aa)) are Lumenal-facing. A glycan (N-linked (GlcNAc...) asparagine) is linked at Asn-148. One can recognise an SSD domain in the interval 242-415 (DIVIMTLGYL…FTFYTTILCI (174 aa)). The helical transmembrane segment at 243-263 (IVIMTLGYLSMHLSFVSLFFS) threads the bilayer. Topologically, residues 264-270 (MRRLGSN) are cytoplasmic. A helical membrane pass occupies residues 271-291 (FWLAATVLFSGVFAFLFGLLV). Topologically, residues 292-296 (TTKLG) are lumenal. A helical transmembrane segment spans residues 297-317 (VPINVLLLSEGLPFLVVTIGF). Topologically, residues 318–366 (EKPIILTRAVLTAAADNRGRAGQASSSTTKSIQDSIQTAIKEQGFEIIR) are cytoplasmic. Residues 367-387 (DYCIEIAILIAGAASGVQGGL) traverse the membrane as a helical segment. The Lumenal segment spans residues 388 to 389 (RQ). The helical transmembrane segment at 390–410 (FCFLAAWILFFDCVLLFTFYT) threads the bilayer. Over 411 to 476 (TILCIKLEIN…RKLRSSSVRR (66 aa)) the chain is Cytoplasmic. The chain crosses the membrane as a helical span at residues 477–497 (FKILMVGGFVLVNVVNLSTIP). The Lumenal segment spans residues 498–601 (FRDSSQGAGL…ESLLKSIEDP (104 aa)). A helical membrane pass occupies residues 602-622 (IISKWIIAALTLSIILNGYLF). The Cytoplasmic portion of the chain corresponds to 623-1130 (NAARWSIKEP…ARGLTMSSSE (508 aa)). Glu-792 serves as the catalytic Charge relay system. 798 to 804 (STSRGAK) contributes to the CoA binding site. NADP(+) contacts are provided by residues 859 to 861 (SRF) and 886 to 894 (DAMGMNMIS). Residue Lys-926 is the Charge relay system of the active site. 955 to 957 (VLK) contacts CoA. Residue Asp-1002 is the Charge relay system of the active site. 1097 to 1098 (AH) lines the CoA pocket. His-1098 (proton donor) is an active-site residue. An NADP(+)-binding site is contributed by 1102-1103 (NR). The span at 1103 to 1122 (RSAATTRTSTPVSAAVSAAR) shows a compositional bias: low complexity. The interval 1103–1130 (RSAATTRTSTPVSAAVSAARGLTMSSSE) is disordered.

It belongs to the HMG-CoA reductase family.

It localises to the endoplasmic reticulum membrane. The enzyme catalyses (R)-mevalonate + 2 NADP(+) + CoA = (3S)-3-hydroxy-3-methylglutaryl-CoA + 2 NADPH + 2 H(+). It functions in the pathway metabolic intermediate biosynthesis; (R)-mevalonate biosynthesis; (R)-mevalonate from acetyl-CoA: step 3/3. HMG-CoA reductase; part of the first module of ergosterol biosynthesis pathway that includes the early steps of the pathway, conserved across all eukaryotes, and which results in the formation of mevalonate from acetyl-coenzyme A (acetyl-CoA). Hmg1 and hmg2 catalyze the reduction of hydroxymethylglutaryl-CoA (HMG-CoA) to mevalonate. The first module starts with the action of the cytosolic acetyl-CoA acetyltransferase erg10B that catalyzes the formation of acetoacetyl-CoA. The hydroxymethylglutaryl-CoA synthases erg13A and erg13B then condense acetyl-CoA with acetoacetyl-CoA to form HMG-CoA. The rate-limiting step of the early module is the reduction to mevalonate by the 3-hydroxy-3-methylglutaryl-coenzyme A (HMG-CoA) reductases hmg1 and hmg2. Mevalonate is also a precursor for the extracellular siderophore triacetylfusarinine C (TAFC). This is 3-hydroxy-3-methylglutaryl-coenzyme A reductase 1 from Aspergillus fumigatus (strain ATCC MYA-4609 / CBS 101355 / FGSC A1100 / Af293) (Neosartorya fumigata).